Here is a 544-residue protein sequence, read N- to C-terminus: Propane 2-monooxygenase, hydroxylase component large subunit (544 aa).

Fe cation contacts are provided by Glu-97, Glu-127, His-130, Glu-192, Glu-226, and His-229.

The protein belongs to the TmoA/XamoA family. In terms of assembly, the propane 2-monooxygenase multicomponent enzyme system is composed of an electron transfer component and a monooxygenase component interacting with the effector protein PrmD. The electron transfer component is composed of a reductase (PrmB), and the monooxygenase component is formed by a large subunit (PrmA) and a small subunit (PrmC). Probably requires the presence of the chaperonin-like protein PrmG to ensure a productive folding, resulting of a soluble PrmA, which leads to the active form of PrmABCD. The cofactor is Fe(2+).

It carries out the reaction propane + NADH + O2 + H(+) = propan-2-ol + NAD(+) + H2O. In terms of biological role, component of the propane 2-monooxygenase multicomponent enzyme system which is involved in the degradation of propane via the O2-dependent hydroxylation of propane. Also able to catalyze the oxidation the water contaminant N-nitrosodimethylamine (NDMA). In Rhodococcus jostii (strain RHA1), this protein is Propane 2-monooxygenase, hydroxylase component large subunit.